The following is a 493-amino-acid chain: Glutamyl-tRNA(Gln) amidotransferase subunit A (493 aa).

Active-site charge relay system residues include K79 and S159. S183 acts as the Acyl-ester intermediate in catalysis.

Belongs to the amidase family. GatA subfamily. Heterotrimer of A, B and C subunits.

The enzyme catalyses L-glutamyl-tRNA(Gln) + L-glutamine + ATP + H2O = L-glutaminyl-tRNA(Gln) + L-glutamate + ADP + phosphate + H(+). In terms of biological role, allows the formation of correctly charged Gln-tRNA(Gln) through the transamidation of misacylated Glu-tRNA(Gln) in organisms which lack glutaminyl-tRNA synthetase. The reaction takes place in the presence of glutamine and ATP through an activated gamma-phospho-Glu-tRNA(Gln). This Rhizobium leguminosarum bv. trifolii (strain WSM2304) protein is Glutamyl-tRNA(Gln) amidotransferase subunit A.